The primary structure comprises 684 residues: TBC1 domain family member 23 (684 aa).

Positions 44-225 constitute a Rab-GAP TBC domain; the sequence is PLPAELRAKV…AIWDGYLQQA (182 aa). S300 is modified (phosphoserine). Residues 334–446 form the Rhodanese domain; the sequence is EGVRFFVVDC…LQQHLADINV (113 aa). S469, S474, and S507 each carry phosphoserine. At T514 the chain carries Phosphothreonine. The may mediate the interaction with C17orf75, FAM91A1 and WDR11 stretch occupies residues 514–558; the sequence is TPVDRHVSSSDRVGKPYRGVKPVFSIGDEEEYDTDEIDSSSMSDD. Positions 514 to 684 are may mediate the interaction with WASHC1; that stretch reads TPVDRHVSSS…IMKVLDALES (171 aa). Position 556 is a phosphoserine (S556). A may mediate the interaction with FKBP15 and WASHC2; required for endosome to Golgi trafficking region spans residues 559–684; the sequence is DRKEVVNIQT…IMKVLDALES (126 aa).

Directly interacts with GOLGA1 and GOLGA4. Interacts with FAM91A1, C17ORF75 and WDR11; the interaction recruits TBC1D23 to AP-1-derived vesicles. Directly interacts with WASHC1 and WASHC2/FAM21. Interacts with FKBP15.

It localises to the golgi apparatus. The protein resides in the trans-Golgi network. It is found in the cytoplasmic vesicle. Functionally, putative Rab GTPase-activating protein which plays a role in vesicular trafficking. Involved in endosome-to-Golgi trafficking. Acts as a bridging protein by binding simultaneously to golgins, including GOLGA1 and GOLGA4, located at the trans-Golgi, and to the WASH complex, located on endosome-derived vesicles. Together with WDR11 complex facilitates the golgin-mediated capture of vesicles generated using AP-1. Plays a role in brain development, including in cortical neuron positioning. May also be important for neurite outgrowth, possibly through its involvement in membrane trafficking and cargo delivery, 2 processes which are essential for axonal and dendritic growth. May act as a general inhibitor of innate immunity signaling, strongly inhibiting multiple TLR and dectin/CLEC7A-signaling pathways. Does not alter initial activation events, but instead affects maintenance of inflammatory gene expression several hours after bacterial lipopolysaccharide (LPS) challenge. The chain is TBC1 domain family member 23 (Tbc1d23) from Mus musculus (Mouse).